A 326-amino-acid polypeptide reads, in one-letter code: Phospho-N-acetylmuramoyl-pentapeptide-transferase (326 aa).

10 helical membrane passes run 2–22 (ILAT…FPYF), 51–71 (VPPM…LLWV), 73–93 (LTPE…LGFI), 113–133 (ILIQ…YSAE), 143–163 (GVII…IVGS), 175–195 (GLAA…AYIT), 199–219 (MNIT…LWFN), 225–245 (IFMG…TSVL), 250–270 (MLFA…IIQI), and 305–325 (VIVM…ITFL).

It belongs to the glycosyltransferase 4 family. MraY subfamily. The cofactor is Mg(2+).

The protein resides in the cell membrane. The enzyme catalyses UDP-N-acetyl-alpha-D-muramoyl-L-alanyl-gamma-D-glutamyl-meso-2,6-diaminopimeloyl-D-alanyl-D-alanine + di-trans,octa-cis-undecaprenyl phosphate = di-trans,octa-cis-undecaprenyl diphospho-N-acetyl-alpha-D-muramoyl-L-alanyl-D-glutamyl-meso-2,6-diaminopimeloyl-D-alanyl-D-alanine + UMP. The protein operates within cell wall biogenesis; peptidoglycan biosynthesis. Its function is as follows. Catalyzes the initial step of the lipid cycle reactions in the biosynthesis of the cell wall peptidoglycan: transfers peptidoglycan precursor phospho-MurNAc-pentapeptide from UDP-MurNAc-pentapeptide onto the lipid carrier undecaprenyl phosphate, yielding undecaprenyl-pyrophosphoryl-MurNAc-pentapeptide, known as lipid I. In Wolbachia sp. subsp. Drosophila simulans (strain wRi), this protein is Phospho-N-acetylmuramoyl-pentapeptide-transferase.